Consider the following 147-residue polypeptide: Truncated RecQ DNA helicase-like protein C212.06c (147 aa).

The 72-residue stretch at 1 to 72 folds into the Helicase C-terminal domain; the sequence is MGVRLVVHYR…CVRSFLASEM (72 aa). The interval 100 to 147 is disordered; that stretch reads ETPKPAIATHSRYNASFSSSPPPQPGSSSGMSAMNTNTTSTTPVSGKT. Residues 125–141 are compositionally biased toward low complexity; that stretch reads GSSSGMSAMNTNTTSTT.

Belongs to the helicase family. RecQ subfamily.

Its function is as follows. Truncated ATP-dependent 3'-5' DNA helicase. This is Truncated RecQ DNA helicase-like protein C212.06c from Schizosaccharomyces pombe (strain 972 / ATCC 24843) (Fission yeast).